Consider the following 234-residue polypeptide: Demethylmenaquinone methyltransferase (234 aa).

Residues Thr58, Asp79, and 106 to 107 (NA) each bind S-adenosyl-L-methionine.

The protein belongs to the class I-like SAM-binding methyltransferase superfamily. MenG/UbiE family.

It carries out the reaction a 2-demethylmenaquinol + S-adenosyl-L-methionine = a menaquinol + S-adenosyl-L-homocysteine + H(+). The protein operates within quinol/quinone metabolism; menaquinone biosynthesis; menaquinol from 1,4-dihydroxy-2-naphthoate: step 2/2. Its function is as follows. Methyltransferase required for the conversion of demethylmenaquinol (DMKH2) to menaquinol (MKH2). The protein is Demethylmenaquinone methyltransferase of Bacillus pumilus (strain SAFR-032).